The sequence spans 241 residues: Sugar fermentation stimulation protein homolog (241 aa).

The protein belongs to the SfsA family.

The sequence is that of Sugar fermentation stimulation protein homolog from Nostoc sp. (strain PCC 7120 / SAG 25.82 / UTEX 2576).